Here is a 948-residue protein sequence, read N- to C-terminus: RNA polymerase-associated protein RapA (948 aa).

A Helicase ATP-binding domain is found at 164 to 332; the sequence is EVADRIAPRV…FARLRLLDPN (169 aa). ATP is bound at residue 177–184; sequence DEVGLGKT. The DEAH box signature appears at 278–281; the sequence is DEAH. Residues 473–627 form the Helicase C-terminal domain; it reads RVEWLIDTLK…TCPTGNALQH (155 aa).

Belongs to the SNF2/RAD54 helicase family. RapA subfamily. In terms of assembly, interacts with the RNAP. Has a higher affinity for the core RNAP than for the holoenzyme. Its ATPase activity is stimulated by binding to RNAP.

Transcription regulator that activates transcription by stimulating RNA polymerase (RNAP) recycling in case of stress conditions such as supercoiled DNA or high salt concentrations. Probably acts by releasing the RNAP, when it is trapped or immobilized on tightly supercoiled DNA. Does not activate transcription on linear DNA. Probably not involved in DNA repair. In Pseudomonas syringae pv. tomato (strain ATCC BAA-871 / DC3000), this protein is RNA polymerase-associated protein RapA.